Here is a 602-residue protein sequence, read N- to C-terminus: Multiple epidermal growth factor-like domains protein 9 (602 aa).

Positions Met1–Ala30 are cleaved as a signal peptide. At Ala31 to Asn514 the chain is on the extracellular side. Residues Ala38–Pro199 form a disordered region. Residue Asn40 is glycosylated (N-linked (GlcNAc...) asparagine). 2 stretches are compositionally biased toward low complexity: residues Pro68–Ala85 and Ala139–Ala166. Residues Pro167 to Asp176 show a composition bias toward pro residues. Asn182 carries N-linked (GlcNAc...) asparagine glycosylation. Pro residues predominate over residues Pro187 to Pro199. Cystine bridges form between Cys204–Cys217, Cys206–Cys224, Cys226–Cys235, Cys238–Cys251, Cys254–Cys266, Cys256–Cys272, Cys274–Cys283, Cys286–Cys298, Cys301–Cys310, Cys303–Cys317, Cys320–Cys329, Cys332–Cys346, Cys349–Cys360, Cys351–Cys371, Cys374–Cys383, Cys386–Cys397, Cys400–Cys415, Cys402–Cys422, Cys425–Cys434, and Cys437–Cys449. Laminin EGF-like domains lie at Cys204–Pro253, Cys254–Pro300, Cys301–Arg348, Cys349–Lys399, and Cys400–Lys451. 2 N-linked (GlcNAc...) asparagine glycosylation sites follow: Asn205 and Asn218. N-linked (GlcNAc...) asparagine glycosylation occurs at Asn245. N-linked (GlcNAc...) asparagine glycosylation is present at Asn267. The N-linked (GlcNAc...) asparagine glycan is linked to Asn305. Asn428 is a glycosylation site (N-linked (GlcNAc...) asparagine). Residues Asn468, Asn481, and Asn500 are each glycosylated (N-linked (GlcNAc...) asparagine). Residues Ile515–Val535 traverse the membrane as a helical segment. Residues Tyr536 to Ala602 are Cytoplasmic-facing.

The protein resides in the membrane. This is Multiple epidermal growth factor-like domains protein 9 (MEGF9) from Homo sapiens (Human).